The sequence spans 428 residues: Immunoglobulin superfamily containing leucine-rich repeat protein (428 aa).

The first 18 residues, 1–18 (MQELHLLWWALLLGLAQA), serve as a signal peptide directing secretion. One can recognise an LRRNT domain in the interval 19–50 (CPEPCDCGEKYGFQIADCAYRDLEAVPPGFPA). Asn51 carries N-linked (GlcNAc...) asparagine glycosylation. 5 LRR repeats span residues 51-72 (NVTALSLSANRLPGLPEGAFRE), 75-96 (LLQSLWLAHNEIRMVAAGALAS), 99-122 (HLKSLDLSHNLISDFAWSDLHNLS), 123-144 (ALQLLKMDSNELTFIPRDAFRS), and 147-168 (ALRSLQLNHNRLHTLAEGTFTP). Residues 180-231 (NPFDCTCGIVWLKTWALATAVSIPEQDNIACTSPHVLKGTPLSRLPPLPCSA) form the LRRCT domain. An Ig-like domain is found at 232–343 (PSVQLSYQPS…GSAESSVDVA (112 aa)). Cys257 and Cys327 form a disulfide bridge. An N-linked (GlcNAc...) asparagine glycan is attached at Asn309.

It localises to the secreted. The chain is Immunoglobulin superfamily containing leucine-rich repeat protein (ISLR) from Pongo abelii (Sumatran orangutan).